We begin with the raw amino-acid sequence, 313 residues long: uncharacterized protein (313 aa).

The N-acetyltransferase domain maps to 6 to 152 (YDILENPEPN…YHASMEKMTG (147 aa)).

To the C-terminal of C.elegans F21C10.9. This is an uncharacterized protein from Caenorhabditis elegans.